Here is a 318-residue protein sequence, read N- to C-terminus: MKHAENEYLNLCRHVMEHGTKKEDRTGTGTVSVFGYQMRFDLSKGFPLLTTKRVPFRLVASELLWFMKGDTNIRYLLQHNNNIWNEWAFKSWVESDEYTGPDMTDFGLRSQQDEEFKVQYDEQMELFKKNVLEDDDFSNKYGYLGDVYGKQWRAWKTTAGETLDQLKDVIEMIKKTPDSRRLIVSAWNPEDVPSMALPPCHTLFQFYVADGKLSCQLYQRSGDIFLGIPFNIASYSLLTHLIAHECGLEVGEFVHTIGDAHIYTNHFEQVEKQLAREPRPFPKLTLNPDVKSVFDFEMEDLTIEGYDPHPAIKAPVAV.

Residues Arg-25 and Arg-180–Arg-181 each bind dUMP. Cys-200 (nucleophile) is an active-site residue. DUMP-binding positions include Arg-220–Asp-223, Asn-231, and His-261–Tyr-263. Asp-223 lines the (6R)-5,10-methylene-5,6,7,8-tetrahydrofolate pocket. Ala-317 serves as a coordination point for (6R)-5,10-methylene-5,6,7,8-tetrahydrofolate.

The protein belongs to the thymidylate synthase family. Bacterial-type ThyA subfamily. In terms of assembly, homodimer.

The protein localises to the cytoplasm. It catalyses the reaction dUMP + (6R)-5,10-methylene-5,6,7,8-tetrahydrofolate = 7,8-dihydrofolate + dTMP. Its pathway is pyrimidine metabolism; dTTP biosynthesis. Catalyzes the reductive methylation of 2'-deoxyuridine-5'-monophosphate (dUMP) to 2'-deoxythymidine-5'-monophosphate (dTMP) while utilizing 5,10-methylenetetrahydrofolate (mTHF) as the methyl donor and reductant in the reaction, yielding dihydrofolate (DHF) as a by-product. This enzymatic reaction provides an intracellular de novo source of dTMP, an essential precursor for DNA biosynthesis. The sequence is that of Thymidylate synthase from Bacillus cereus (strain ATCC 10987 / NRS 248).